Reading from the N-terminus, the 213-residue chain is Phosphate-specific transport system accessory protein PhoU homolog 2 (213 aa).

This sequence belongs to the PhoU family. Homodimer.

The protein resides in the cytoplasm. Functionally, plays a role in the regulation of phosphate uptake. In this role, it may bind, possibly as a chaperone, to PhoR, PhoP or a PhoR-PhoP complex to promote dephosphorylation of phospho-PhoP, or inhibit formation of the PhoR-PhoP transitory complex. This Mycobacterium bovis (strain ATCC BAA-935 / AF2122/97) protein is Phosphate-specific transport system accessory protein PhoU homolog 2 (phoU2).